Here is an 822-residue protein sequence, read N- to C-terminus: Dimethyl sulfoxide/trimethylamine N-oxide reductase (822 aa).

A signal peptide (tat-type signal) is located at residues Met-1–Ala-42. Mo-bis(molybdopterin guanine dinucleotide) is bound by residues Trp-158, Trp-158–Ser-160, Ser-189, Lys-232–Thr-233, Ile-262–Asn-263, Gln-283–Asp-285, Trp-364–Ser-365, Arg-368, Asn-476, His-480, Gln-500–Asp-501, Arg-523, Asp-553, Ala-683–Pro-686, Arg-689, His-691–Gln-693, Asn-779, and Gly-796–Gln-797.

This sequence belongs to the prokaryotic molybdopterin-containing oxidoreductase family. As to quaternary structure, homodimer. Mo-bis(molybdopterin guanine dinucleotide) is required as a cofactor. In terms of processing, predicted to be exported by the Tat system. The position of the signal peptide cleavage has been experimentally proven.

The protein resides in the periplasm. It carries out the reaction dimethyl sulfide + a menaquinone + H2O = dimethyl sulfoxide + a menaquinol. The catalysed reaction is trimethylamine + 2 Fe(III)-[cytochrome c] + H2O = trimethylamine N-oxide + 2 Fe(II)-[cytochrome c] + 3 H(+). Catalyzes the reduction of dimethyl sulfoxide (DMSO) and trimethylamine N-oxide (TMAO) to dimethyl sulfide (DMS) and trimethylamine, respectively. The terminal DMSO reductase can also use various sulfoxides and N-oxide compounds as terminal electron acceptor in addition to DMSO and TMAO. The chain is Dimethyl sulfoxide/trimethylamine N-oxide reductase (dmsA) from Cereibacter sphaeroides (Rhodobacter sphaeroides).